The primary structure comprises 225 residues: Myelin-associated neurite-outgrowth inhibitor (225 aa).

Over 1–58 the chain is Cytoplasmic; the sequence is MNPVYSPGSSGVPYANAKGIGYPAGFPMGYAAAAPAYSPNMYAGPNPAFQQELEHPAH. The helical transmembrane segment at 59–75 threads the bilayer; that stretch reads VSSGVQMFMFGHAFSVA. Residues 76–173 are Extracellular-facing; that stretch reads RNGAIPSGYT…PAPIQSPRGN (98 aa). Residues 174 to 193 form a helical membrane-spanning segment; the sequence is GVAMGMVAGTTMAMSAGTLL. Over 194–225 the chain is Cytoplasmic; sequence TSHYPSPVAPQVTMPTYRPPGTPTYSYVPPQW.

It belongs to the FAM168 family.

It is found in the cytoplasm. The protein localises to the perinuclear region. Its subcellular location is the cell membrane. It localises to the cell projection. The protein resides in the axon. Inhibitor of neuronal axonal outgrowth. This chain is Myelin-associated neurite-outgrowth inhibitor (fam168b), found in Xenopus laevis (African clawed frog).